Reading from the N-terminus, the 271-residue chain is Protein FANTASTIC FOUR 1 (271 aa).

One can recognise an FAF domain in the interval 114-168 (NSFPPPLNSVNGFNNSRMVKSYKEDGRLVVQAIRVCSPPRCFVSERREGRLRLCL). Residues 174 to 255 (NSQDAEEEFE…KRRCNENGCE (82 aa)) form a disordered region. Residues 177–224 (DAEEEFEEEDEDDQYDAEEEEEEEEEEEEEEEEEEEEEEEEEEEDEEG) are compositionally biased toward acidic residues. Positions 237–247 (GNKKVSNRPKR) are enriched in basic residues.

This sequence belongs to the fantastic four family. Expressed in the shoot apex, stamens, anthers and young siliques. Detected in provascular and vascular tissue.

Functionally, able to repress WUS when constitutively overexpressed, but have no effect on CLV3. This chain is Protein FANTASTIC FOUR 1 (FAF1), found in Arabidopsis thaliana (Mouse-ear cress).